The sequence spans 306 residues: IN2-2 protein (306 aa).

The Proton donor role is filled by Tyr-64. Position 131 (His-131) interacts with substrate. 210–220 provides a ligand contact to NADP(+); it reads SPLGRGFFSSG. Positions 272-306 are disordered; the sequence is LGSPPRKRRLPHTWHNKNRQLQPERGGTVCEAYTG. Basic residues predominate over residues 276–289; sequence PRKRRLPHTWHNKN.

It belongs to the aldo/keto reductase family. Aldo/keto reductase 2 subfamily. As to expression, leaves and roots.

This Zea mays (Maize) protein is IN2-2 protein (IN2-2).